The chain runs to 459 residues: Probable Delta(5) fatty acid desaturase C (459 aa).

The 79-residue stretch at 9 to 87 (KKLYSWKEIS…LKQYEIGQVS (79 aa)) folds into the Cytochrome b5 heme-binding domain. Heme is bound by residues histidine 45 and histidine 68. The next 2 helical transmembrane spans lie at 121 to 141 (FAFGIIARLIFVYWFLITSYY) and 151 to 171 (FYLNCLLAIVYSLSNSLFSLH). A Histidine box-1 motif is present at residues 174–178 (HDACH). A helical membrane pass occupies residues 187–207 (VWKWLGATYDLFIGASFFYWC). The short motif at 210–215 (HVIGHH) is the Histidine box-2 element. A run of 2 helical transmembrane segments spans residues 289–309 (FEIISFIIGKLVFIVFRFIIP) and 315–335 (LVNLLTYFFIAEFFFGLYLSF). Residues 394 to 398 (QVVHH) carry the Histidine box-3 motif.

The protein belongs to the fatty acid desaturase type 1 family. Fe cation is required as a cofactor.

The protein resides in the membrane. The protein is Probable Delta(5) fatty acid desaturase C of Dictyostelium discoideum (Social amoeba).